Consider the following 236-residue polypeptide: MARRYWNIHLEEMMEAGIHFGHGTRKWNPRMAPYISAKHKGIHITNLTRTARFLSEACDLVFDAASRGKQFLIVGTKNKAADLVARAAIRARCHYVNQKWLGGMLTNWSTTETRLHKFRDLRTEQKGGRLDSLPKRDAAILKRQLSRLQTYLGGIKYMTRVPDIVIVVDQQEEYTALRECITLGIPTICLIDTNCDPDLADISIPANDDAIASIRLILNKLVFAICEGRSSYIRNP.

Belongs to the universal ribosomal protein uS2 family.

Its subcellular location is the plastid. It is found in the chloroplast. The chain is Small ribosomal subunit protein uS2c (rps2) from Citrus sinensis (Sweet orange).